A 92-amino-acid chain; its full sequence is Small ribosomal subunit protein uS19 (92 aa).

The disordered stretch occupies residues 73–92; it reads EFSPSRTYYGHAADKKAKRR.

Belongs to the universal ribosomal protein uS19 family.

In terms of biological role, protein S19 forms a complex with S13 that binds strongly to the 16S ribosomal RNA. This is Small ribosomal subunit protein uS19 from Maricaulis maris (strain MCS10) (Caulobacter maris).